A 310-amino-acid polypeptide reads, in one-letter code: MARTDNDTWDLASSVGATATMVAAARAVATRAPRPVIDDPFAAPLVQAVGVDFFTRLATGELTTEELDTNDAESPVGMSRFADAMAARTRFFDDFFAEAMRAGPPPIRQGVILASGLDARAYRLSWPQDMVLFEIDQPEVLTFKAATLADLGVRPSTKLATVAVDLRNDWPAALAEAGFDASAPTAWIAEGLLGYLPPDAQDRLLDTIGELSAPGSRLAVESVPTHHEADQEELREKMKESSDRWRSHGFDVDFSELVFLGERADVTDYLRDRGWTVDATPTNQLLTRYGLAPLDSDEGFAEVVYVSATR.

S-adenosyl-L-methionine is bound by residues aspartate 136 and 165 to 166; that span reads DL.

It belongs to the UPF0677 family.

In terms of biological role, exhibits S-adenosyl-L-methionine-dependent methyltransferase activity. The sequence is that of Putative S-adenosyl-L-methionine-dependent methyltransferase Mvan_1346 from Mycolicibacterium vanbaalenii (strain DSM 7251 / JCM 13017 / BCRC 16820 / KCTC 9966 / NRRL B-24157 / PYR-1) (Mycobacterium vanbaalenii).